Reading from the N-terminus, the 917-residue chain is Protein STE5 (917 aa).

2 disordered regions span residues 1-25 and 58-151; these read MMET…YSGT and FQRS…LSDN. Positions 16–25 are enriched in polar residues; sequence FGSSTQYSGT. Over residues 69–84 the composition is skewed to low complexity; that stretch reads SPSPISSSTFSFSPKS. Polar residues-rich tracts occupy residues 85–110 and 118–138; these read RVTS…STDY and TSSL…NLSR. Serine 329 is modified (phosphoserine). Positions 778–794 are enriched in acidic residues; sequence HDDDDEEDNDDSTDNEL. The tract at residues 778–821 is disordered; sequence HDDDDEEDNDDSTDNELDNSSGSLSDAESTTTIHIDSPFDNENA. The span at 799-821 shows a compositional bias: polar residues; the sequence is GSLSDAESTTTIHIDSPFDNENA.

This sequence to yeast FAR1. Post-translationally, may be regulated at the phosphorylation level, and by the mating type of the cell and depends on an intact pheromone-response pathway.

It is found in the cytoplasm. Functionally, component of the pheromone signal transduction pathway. It mediates pheromone signals acting between STE20 and STE11. It is absolutely required for pheromone-induced transcription of FUS1. May play a role in cell-cycle arrest in response to pheromone. The protein is Protein STE5 (STE5) of Saccharomyces cerevisiae (strain ATCC 204508 / S288c) (Baker's yeast).